Reading from the N-terminus, the 282-residue chain is Anamorsin homolog (282 aa).

Residues 5 to 151 are N-terminal SAM-like domain; sequence VDTNNFVLLL…EVGAKTALSL (147 aa). The linker stretch occupies residues 152–196; it reads SFAPKPAQPKAETSAAQIWTLSAQDIDDEDVDLLDSDTLLDEDDL. 4 residues coordinate [2Fe-2S] cluster: C208, C218, C221, and C223. Residues 208–223 are fe-S binding site A; that stretch reads CGPGSGKKKACKNCTC. Residues C243, C246, C254, and C257 each contribute to the [4Fe-4S] cluster site. Short sequence motifs (cx2C motif) lie at residues 243 to 246 and 254 to 257; these read CGSC and CSTC. Residues 243–257 form a fe-S binding site B region; that stretch reads CGSCYLGDAFRCSTC.

Belongs to the anamorsin family. In terms of assembly, monomer. It depends on [2Fe-2S] cluster as a cofactor. The cofactor is [4Fe-4S] cluster.

The protein resides in the cytoplasm. It is found in the mitochondrion intermembrane space. In terms of biological role, component of the cytosolic iron-sulfur (Fe-S) protein assembly (CIA) machinery. Required for the maturation of extramitochondrial Fe-S proteins. Part of an electron transfer chain functioning in an early step of cytosolic Fe-S biogenesis, facilitating the de novo assembly of a [4Fe-4S] cluster on the cytosolic Fe-S scaffold complex. Electrons are transferred from NADPH via a FAD- and FMN-containing diflavin oxidoreductase. Together with the diflavin oxidoreductase, also required for the assembly of the diferric tyrosyl radical cofactor of ribonucleotide reductase (RNR), probably by providing electrons for reduction during radical cofactor maturation in the catalytic small subunit. This Nematostella vectensis (Starlet sea anemone) protein is Anamorsin homolog.